Reading from the N-terminus, the 309-residue chain is Homoserine O-acetyltransferase (309 aa).

The active-site Acyl-thioester intermediate is the Cys-142. Lys-163 and Ser-192 together coordinate substrate. His-235 functions as the Proton acceptor in the catalytic mechanism. The active site involves Glu-237. Arg-249 contacts substrate.

The protein belongs to the MetA family.

It is found in the cytoplasm. It catalyses the reaction L-homoserine + acetyl-CoA = O-acetyl-L-homoserine + CoA. The protein operates within amino-acid biosynthesis; L-methionine biosynthesis via de novo pathway; O-acetyl-L-homoserine from L-homoserine: step 1/1. In terms of biological role, transfers an acetyl group from acetyl-CoA to L-homoserine, forming acetyl-L-homoserine. The protein is Homoserine O-acetyltransferase of Allorhizobium ampelinum (strain ATCC BAA-846 / DSM 112012 / S4) (Agrobacterium vitis (strain S4)).